A 498-amino-acid polypeptide reads, in one-letter code: ATP synthase subunit beta, chloroplastic (498 aa).

Position 172–179 (172–179 (GGAGVGKT)) interacts with ATP.

It belongs to the ATPase alpha/beta chains family. F-type ATPases have 2 components, CF(1) - the catalytic core - and CF(0) - the membrane proton channel. CF(1) has five subunits: alpha(3), beta(3), gamma(1), delta(1), epsilon(1). CF(0) has four main subunits: a(1), b(1), b'(1) and c(9-12).

It localises to the plastid. The protein resides in the chloroplast thylakoid membrane. The enzyme catalyses ATP + H2O + 4 H(+)(in) = ADP + phosphate + 5 H(+)(out). Produces ATP from ADP in the presence of a proton gradient across the membrane. The catalytic sites are hosted primarily by the beta subunits. The chain is ATP synthase subunit beta, chloroplastic from Sorghum bicolor (Sorghum).